A 185-amino-acid polypeptide reads, in one-letter code: Riboflavin kinase (185 aa).

2 residues coordinate Mg(2+): Thr-41 and Asn-43. The active-site Nucleophile is the Glu-122.

The protein belongs to the flavokinase family. Zn(2+) serves as cofactor. Requires Mg(2+) as cofactor.

The enzyme catalyses riboflavin + ATP = FMN + ADP + H(+). It functions in the pathway cofactor biosynthesis; FMN biosynthesis; FMN from riboflavin (ATP route): step 1/1. In terms of biological role, catalyzes the phosphorylation of riboflavin (vitamin B2) to form flavin mononucleotide (FMN) coenzyme. This Kluyveromyces lactis (strain ATCC 8585 / CBS 2359 / DSM 70799 / NBRC 1267 / NRRL Y-1140 / WM37) (Yeast) protein is Riboflavin kinase (FMN1).